A 78-amino-acid polypeptide reads, in one-letter code: Major outer membrane lipoprotein Lpp (78 aa).

An N-terminal signal peptide occupies residues 1 to 20; sequence MNRTKLVLGAVILASTMLAG. Cys21 carries the N-palmitoyl cysteine lipid modification. Cys21 carries the S-diacylglycerol cysteine lipid modification. Repeats lie at residues 24–34 and 38–48; these read NAKIDQLSSDV and NAKVDQLSNDV. Positions 27–75 form a coiled coil; the sequence is IDQLSSDVQTLNAKVDQLSNDVNAVRADVQAAKDDAARANQRLDNQAQA. Residue Lys78 is modified to N6-murein peptidoglycan lysine.

Belongs to the Lpp family. Homotrimer.

The protein localises to the cell outer membrane. Its subcellular location is the secreted. It is found in the cell wall. Its function is as follows. A highly abundant outer membrane lipoprotein that controls the distance between the inner and outer membranes. The only protein known to be covalently linked to the peptidoglycan network (PGN). Also non-covalently binds the PGN. The link between the cell outer membrane and PGN contributes to maintenance of the structural and functional integrity of the cell envelope, and maintains the correct distance between the PGN and the outer membrane. This is Major outer membrane lipoprotein Lpp from Yersinia pestis.